Reading from the N-terminus, the 243-residue chain is Hydroxyacylglutathione hydrolase (243 aa).

Zn(2+) contacts are provided by H59, H61, D63, H64, H117, D135, and H173.

The protein belongs to the metallo-beta-lactamase superfamily. Glyoxalase II family. As to quaternary structure, monomer. Zn(2+) is required as a cofactor.

The enzyme catalyses an S-(2-hydroxyacyl)glutathione + H2O = a 2-hydroxy carboxylate + glutathione + H(+). It participates in secondary metabolite metabolism; methylglyoxal degradation; (R)-lactate from methylglyoxal: step 2/2. Thiolesterase that catalyzes the hydrolysis of S-D-lactoyl-glutathione to form glutathione and D-lactic acid. The polypeptide is Hydroxyacylglutathione hydrolase (Acidiphilium cryptum (strain JF-5)).